Consider the following 135-residue polypeptide: Hemoglobin subunit beta-3 (135 aa).

The Globin domain occupies 2–135 (HWTAEEKALV…VVDALSKAYQ (134 aa)). Heme b-binding residues include His57 and His81.

Belongs to the globin family. Hb 3 is a heterotetramer of two alpha and two beta-3 chains. In terms of tissue distribution, red blood cells (at protein level).

Involved in oxygen transport from gills to the various peripheral tissues. The sequence is that of Hemoglobin subunit beta-3 from Somniosus microcephalus (Greenland sleeper shark).